We begin with the raw amino-acid sequence, 161 residues long: Ribonuclease H (161 aa).

The region spanning 5-149 is the RNase H type-1 domain; sequence EKLAIAAATD…VDAIAVAFSK (145 aa). Residues aspartate 14, glutamate 53, aspartate 78, and aspartate 141 each coordinate Mg(2+).

The protein belongs to the RNase H family. Monomer. Mg(2+) is required as a cofactor.

The protein resides in the cytoplasm. The enzyme catalyses Endonucleolytic cleavage to 5'-phosphomonoester.. Its function is as follows. Endonuclease that specifically degrades the RNA of RNA-DNA hybrids. The protein is Ribonuclease H of Prochlorococcus marinus (strain NATL1A).